The primary structure comprises 201 residues: Large ribosomal subunit protein uL4 (201 aa).

Residues 39–72 (RRGTASTKTRAQVSKSGKKMYSQKGTGNARHGDR) are disordered. A compositionally biased stretch (polar residues) spans 42–53 (TASTKTRAQVSK).

Belongs to the universal ribosomal protein uL4 family. Part of the 50S ribosomal subunit.

Its function is as follows. One of the primary rRNA binding proteins, this protein initially binds near the 5'-end of the 23S rRNA. It is important during the early stages of 50S assembly. It makes multiple contacts with different domains of the 23S rRNA in the assembled 50S subunit and ribosome. Functionally, forms part of the polypeptide exit tunnel. The sequence is that of Large ribosomal subunit protein uL4 from Deinococcus deserti (strain DSM 17065 / CIP 109153 / LMG 22923 / VCD115).